A 282-amino-acid chain; its full sequence is ATP synthase gamma chain (282 aa).

It belongs to the ATPase gamma chain family. As to quaternary structure, F-type ATPases have 2 components, CF(1) - the catalytic core - and CF(0) - the membrane proton channel. CF(1) has five subunits: alpha(3), beta(3), gamma(1), delta(1), epsilon(1). CF(0) has three main subunits: a, b and c.

Its subcellular location is the cell membrane. In terms of biological role, produces ATP from ADP in the presence of a proton gradient across the membrane. The gamma chain is believed to be important in regulating ATPase activity and the flow of protons through the CF(0) complex. The sequence is that of ATP synthase gamma chain from Clostridium botulinum (strain Kyoto / Type A2).